Consider the following 1433-residue polypeptide: DNA-directed RNA polymerase subunit beta' (1433 aa).

Zn(2+)-binding residues include Cys66, Cys68, Cys81, and Cys84. Positions 474, 476, and 478 each coordinate Mg(2+). 4 residues coordinate Zn(2+): Cys823, Cys897, Cys904, and Cys907.

This sequence belongs to the RNA polymerase beta' chain family. The RNAP catalytic core consists of 2 alpha, 1 beta, 1 beta' and 1 omega subunit. When a sigma factor is associated with the core the holoenzyme is formed, which can initiate transcription. Mg(2+) serves as cofactor. The cofactor is Zn(2+).

It catalyses the reaction RNA(n) + a ribonucleoside 5'-triphosphate = RNA(n+1) + diphosphate. Functionally, DNA-dependent RNA polymerase catalyzes the transcription of DNA into RNA using the four ribonucleoside triphosphates as substrates. The chain is DNA-directed RNA polymerase subunit beta' from Amoebophilus asiaticus (strain 5a2).